A 1228-amino-acid polypeptide reads, in one-letter code: P3N-PIPO polyprotein (1228 aa).

In terms of domain architecture, Peptidase S30 spans 408-547; the sequence is IVGNSKINYI…RSVYAKMDQY (140 aa). Active-site for P1 proteinase activity residues include His-456, Asp-465, and Ser-499. The Involved in interaction with stylet and aphid transmission signature appears at 598-601; sequence KITC. The short motif at 856-858 is the Involved in virions binding and aphid transmission element; the sequence is PTK. Residues 882–1004 enclose the Peptidase C6 domain; it reads MYIAKKGYCY…DSEMKHYIVG (123 aa). Catalysis depends on for helper component proteinase activity residues Cys-890 and His-963.

The protein belongs to the potyviridae P3N-PIPO polyprotein family. As to quaternary structure, interacts (via PIPO domain) with host PCaP1 protein; this interaction may help to anchor the movement complex to the plasma membrane from which the complex could move to the plasmodesmata. Potyviral RNA is expressed as two polyproteins which undergo post-translational proteolytic processing. Genome polyprotein is processed by NIa-pro, P1 and HC-pro proteinases resulting in the production of at least ten individual proteins. P3N-PIPO is cleaved by P1 and HC-pro proteinases resulting in the production of three individual proteins. The P1 proteinase and the HC-pro cleave only their respective C-termini autocatalytically.

Its subcellular location is the host cell junction. It is found in the host plasmodesma. The catalysed reaction is Hydrolyzes a Gly-|-Gly bond at its own C-terminus, commonly in the sequence -Tyr-Xaa-Val-Gly-|-Gly, in the processing of the potyviral polyprotein.. Its function is as follows. Required for aphid transmission and also has proteolytic activity. Only cleaves a Gly-Gly dipeptide at its own C-terminus. Interacts with virions and aphid stylets. Acts as a suppressor of RNA-mediated gene silencing, also known as post-transcriptional gene silencing (PTGS), a mechanism of plant viral defense that limits the accumulation of viral RNAs. May have RNA-binding activity. In terms of biological role, allows efficient cell to cell propagation, by bypassing the host cell wall barrier. Transports viral genome to neighboring plant cells directly through plasmosdesmata, without any budding. This Carica papaya (Papaya) protein is P3N-PIPO polyprotein.